A 36-amino-acid chain; its full sequence is Neuropeptide F (36 aa).

F36 is modified (phenylalanine amide).

Belongs to the NPY family. As to expression, central and peripheral nervous system, and muscular pharynx.

It localises to the secreted. May perform an important neurotransmitter function and may regulate muscular activity. This Arthurdendyus triangulatus (New Zealand flatworm) protein is Neuropeptide F.